The sequence spans 129 residues: NADPH-dependent 7-cyano-7-deazaguanine reductase (129 aa).

Cysteine 43 functions as the Thioimide intermediate in the catalytic mechanism. The Proton donor role is filled by aspartate 50. Substrate-binding positions include valine 65 to leucine 67 and histidine 84 to glutamate 85.

Belongs to the GTP cyclohydrolase I family. QueF type 1 subfamily.

It localises to the cytoplasm. It catalyses the reaction 7-aminomethyl-7-carbaguanine + 2 NADP(+) = 7-cyano-7-deazaguanine + 2 NADPH + 3 H(+). Its pathway is tRNA modification; tRNA-queuosine biosynthesis. Its function is as follows. Catalyzes the NADPH-dependent reduction of 7-cyano-7-deazaguanine (preQ0) to 7-aminomethyl-7-deazaguanine (preQ1). The chain is NADPH-dependent 7-cyano-7-deazaguanine reductase from Aquifex aeolicus (strain VF5).